The sequence spans 288 residues: Thymidylate synthase (288 aa).

Arg21 serves as a coordination point for dUMP. Residue His51 participates in (6R)-5,10-methylene-5,6,7,8-tetrahydrofolate binding. 150-151 (RR) is a binding site for dUMP. Cys170 acts as the Nucleophile in catalysis. DUMP-binding positions include 190 to 193 (RSGD), Asn201, and 231 to 233 (HIY). Asp193 contacts (6R)-5,10-methylene-5,6,7,8-tetrahydrofolate. Ala287 is a (6R)-5,10-methylene-5,6,7,8-tetrahydrofolate binding site.

The protein belongs to the thymidylate synthase family. Bacterial-type ThyA subfamily. As to quaternary structure, homodimer.

The protein localises to the cytoplasm. It carries out the reaction dUMP + (6R)-5,10-methylene-5,6,7,8-tetrahydrofolate = 7,8-dihydrofolate + dTMP. It functions in the pathway pyrimidine metabolism; dTTP biosynthesis. In terms of biological role, catalyzes the reductive methylation of 2'-deoxyuridine-5'-monophosphate (dUMP) to 2'-deoxythymidine-5'-monophosphate (dTMP) while utilizing 5,10-methylenetetrahydrofolate (mTHF) as the methyl donor and reductant in the reaction, yielding dihydrofolate (DHF) as a by-product. This enzymatic reaction provides an intracellular de novo source of dTMP, an essential precursor for DNA biosynthesis. This Mycoplasma mobile (strain ATCC 43663 / 163K / NCTC 11711) (Mesomycoplasma mobile) protein is Thymidylate synthase.